A 95-amino-acid chain; its full sequence is Small ribosomal subunit protein uS15 (95 aa).

This sequence belongs to the universal ribosomal protein uS15 family. As to quaternary structure, part of the 30S ribosomal subunit. Forms a bridge to the 50S subunit in the 70S ribosome, contacting the 23S rRNA.

Its function is as follows. One of the primary rRNA binding proteins, it binds directly to 16S rRNA where it helps nucleate assembly of the platform of the 30S subunit by binding and bridging several RNA helices of the 16S rRNA. Forms an intersubunit bridge (bridge B4) with the 23S rRNA of the 50S subunit in the ribosome. In Streptomyces avermitilis (strain ATCC 31267 / DSM 46492 / JCM 5070 / NBRC 14893 / NCIMB 12804 / NRRL 8165 / MA-4680), this protein is Small ribosomal subunit protein uS15.